We begin with the raw amino-acid sequence, 1996 residues long: Non-reducing polyketide synthase atnG (1996 aa).

The interval 9–245 (FLFGDQADAP…AELPAFGAVH (237 aa)) is N-terminal acylcarrier protein transacylase (SAT) domain. One can recognise a Ketosynthase family 3 (KS3) domain in the interval 366–794 (SGSVAVIGMS…GGNSCFVLEE (429 aa)). Active-site for beta-ketoacyl synthase activity residues include Cys-538, His-673, and His-713. Residues 891-1150 (AFAFTGQGAH…VKYTQAISHC (260 aa)) are malonyl-CoA:ACP transacylase (MAT) domain. The For acyl/malonyl transferase activity role is filled by Ser-982. Residues 1263–1392 (HHLVSQDDNG…CCIRQTDEQD (130 aa)) form an N-terminal hotdog fold region. The PKS/mFAS DH domain maps to 1263–1569 (HHLVSQDDNG…FRKMPRTTLH (307 aa)). Residues 1267 to 1568 (SQDDNGKEQS…RFRKMPRTTL (302 aa)) form a product template (PT) domain region. Residue His-1295 is the Proton acceptor; for dehydratase activity of the active site. Residues 1416–1569 (ASGIANRFQG…FRKMPRTTLH (154 aa)) are C-terminal hotdog fold. Residue Asp-1481 is the Proton donor; for dehydratase activity of the active site. The segment at 1573-1621 (GKAVPPKPAKETSHPSVEATAPATTNGRSSATNAQAEAPAPPVNGSNGH) is disordered. The span at 1594 to 1607 (PATTNGRSSATNAQ) shows a compositional bias: polar residues. The Carrier domain maps to 1620-1697 (GHRKTVESVL…DAQRQLRTLE (78 aa)). Ser-1657 is modified (O-(pantetheine 4'-phosphoryl)serine). Residues 1725-1923 (KRECNVVLMQ…ERTFVVWAKK (199 aa)) form a thioesterase (TE) domain region.

Its pathway is secondary metabolite biosynthesis; terpenoid biosynthesis. In terms of biological role, non-reducing polyketide synthase; part of the gene cluster that mediates the biosynthesis of the meroterpenoids arthripenoids. The pathway begins with the HR-PKS atnH that catalyzes two chain-extension steps to form a reduced triketide, which then primes the SAT domain in the NR-PKS atnG to initiate three more cycles of extension to give a linear hexaketide corresponding to the polyketide part of arthripenoids. The FAD-dependent monooxygenase atnJ then performs an oxidative decarboxylation at C11 of the atnH/atnG product, via an electrophilic aromatic hydroxylation with concomitant ipso-decarboxylation. The membrane-bound polyprenyl transferase atnF then introduces a farnesyl group before the FAD-dependent monooxygenase atnK functions as the first epoxidase on terminal C12'-C13' olefin, followed by a second epoxidation on C7'-C8' catalyzed by atnA. The terpene cyclase/mutase atnI then initiates the sequential tricyclic ring formation through protonation of the terminal epoxide and catalyzes the regioselective and stereoselective 6/6/6-tricyclic ring formation. The cytochrome P450 monooxygenase atnM is responsible for hydroxylating both C1' and C10'. The next steps may involve ketoreduction and acetyl transfer by the ketoreductase atnB and the acetyltransferase atnC, and lead to the production of arthripenoid B, the final biosynthetic product of the atn cluster. The hydroquinone moiety in arthripenoid B is prone to undergo spontaneous oxidation to afford a benzoquinone compound, a key intermediate for generating structure diversity. For instance, addition of a cysteine followed by ring contraction gives arthripenoid A, tautomerization gives the main product arthripenoid C, addition of a molecular of water or amine affords arthripenoid D or E, respectively, and loss of one water forms arthripenoid F. This Arthrinium sp protein is Non-reducing polyketide synthase atnG.